The primary structure comprises 595 residues: MEPRSRRRRSRQLVATFLRDPGSGRVYRRGKLIGKGAFSRCYKLTDMSTSAVFALKVVPRGGAGRLRLRGKVEREIALHSRLRHRNIVAFHAHFADRDHVYMVLEYCSRQSLAHVLKVRRTLTEPEVRYYLRGLVSGLRYLHQQRIVHRDLKPSNFFLNKNMEVKIGDLGLAARVGPAGRCHRVLCGTPNFQAPEVVSRNGHSCKSDIWALGCIMYTVLTGTPPFAAAPLSEMYQNIRDGHYLEPTHLSPSARSLIARLLAPDPAERPSLDHLLQDDFFSQGFTPERLPPHSCHSPPVFAFPPPLGRLFRKVGQLLLTQCRPPCPFTSKEASGPGEEGTEPDHMEAGNEERDPLCTEGRIHLLTLGTPRTGLAGPKGSLALQLEVATRKLFLCLDAGPMAGQDPPGEQRPVLWAPKWVDYSLKYGFGYQLSDGGSGVLFRDGSHMALRPQGGHVSYQPDQGTLWTFTLRDVPSPLRAKLAVLRLFACYMQRRLREEGTVPMPATPASPDISLLSFIADSQAMVMLFSNGTVQVSLKTSQTQLVLSGEDEDLLLTLQEPGGPAVGVSYTLDVLRSHGFTLAVHHHLRHGLHLLQSV.

A Protein kinase domain is found at 27–279 (YRRGKLIGKG…LDHLLQDDFF (253 aa)). ATP-binding positions include 33 to 41 (IGKGAFSRC) and Lys56. Asp150 acts as the Proton acceptor in catalysis. The segment at 326 to 350 (FTSKEASGPGEEGTEPDHMEAGNEE) is disordered. Basic and acidic residues predominate over residues 340 to 350 (EPDHMEAGNEE). 2 consecutive POLO box domains span residues 413–491 (WAPK…YMQR) and 509–595 (DISL…LQSV).

Belongs to the protein kinase superfamily. Ser/Thr protein kinase family. CDC5/Polo subfamily. As to expression, expressed in the cerebellum, eye and brain cortex (at protein level). Expressed in highly differentiated tissues, such as brain, eyes and ovary. Not detectable in proliferating tissues, such as the colon, spleen and placenta.

The protein localises to the nucleus. The protein resides in the nucleolus. Its subcellular location is the cytoplasm. Its function is as follows. Inactive serine/threonine-protein kinase that plays a role in cell cycle progression and neuronal differentiation. The sequence is that of Inactive serine/threonine-protein kinase PLK5 from Mus musculus (Mouse).